Consider the following 141-residue polypeptide: Hemoglobin subunit alpha-D (141 aa).

One can recognise a Globin domain in the interval 1 to 141 (VLTAEDKKLI…VAAVLAEKYR (141 aa)). Heme b is bound by residues histidine 58 and histidine 87.

It belongs to the globin family. As to quaternary structure, heterotetramer of two alpha-D chains and two beta chains. In terms of tissue distribution, red blood cells.

In terms of biological role, involved in oxygen transport from the lung to the various peripheral tissues. This Sturnus vulgaris (Starling) protein is Hemoglobin subunit alpha-D (HBAD).